A 221-amino-acid polypeptide reads, in one-letter code: Endo-1,4-beta-xylanase 2 (221 aa).

The N-terminal stretch at 1 to 19 (MVAFTSLLAGFAAIAGVLS) is a signal peptide. One can recognise a GH11 domain in the interval 32-221 (QTIGPGTGYS…SSGSASITVS (190 aa)). N-linked (GlcNAc...) asparagine glycosylation is found at N69 and N92. E117 serves as the catalytic Nucleophile. Residue E208 is the Proton donor of the active site.

The protein belongs to the glycosyl hydrolase 11 (cellulase G) family.

It is found in the secreted. It catalyses the reaction Endohydrolysis of (1-&gt;4)-beta-D-xylosidic linkages in xylans.. The protein operates within glycan degradation; xylan degradation. In terms of biological role, endo-1,4-beta-xylanase involved in the hydrolysis of xylan, a major structural heterogeneous polysaccharide found in plant biomass representing the second most abundant polysaccharide in the biosphere, after cellulose. The sequence is that of Endo-1,4-beta-xylanase 2 (Xyn2) from Trichoderma harzianum (Hypocrea lixii).